We begin with the raw amino-acid sequence, 285 residues long: MPKMAAEKNSKPAKKAKLGQNFLSDASGALKIVEALGDISDATVVEIGPGRGAITDHLAKRAKRLIAVEIDRVLAAQLRLRYSRLENVEILEADILAVELSTVLAQRIGPLRDLRPTKPEKVRIIGNLPYYITSDILLRLFEAHALIDFAVIMVQKEVADRIAAKPGTRDYGLLSATSQLYTHVEKLFTLPPGSFNPAPQVHSTVLKLQMEPKLEALGVDEEGFDSFLKLIFGQKRKTLFNNLRVAYDMAKAREAMKAVGLKSDVRAEAVALEKTAQLYNELRKG.

Positions 21, 23, 48, 69, 94, and 127 each coordinate S-adenosyl-L-methionine.

Belongs to the class I-like SAM-binding methyltransferase superfamily. rRNA adenine N(6)-methyltransferase family. RsmA subfamily.

The protein localises to the cytoplasm. The enzyme catalyses adenosine(1518)/adenosine(1519) in 16S rRNA + 4 S-adenosyl-L-methionine = N(6)-dimethyladenosine(1518)/N(6)-dimethyladenosine(1519) in 16S rRNA + 4 S-adenosyl-L-homocysteine + 4 H(+). In terms of biological role, specifically dimethylates two adjacent adenosines (A1518 and A1519) in the loop of a conserved hairpin near the 3'-end of 16S rRNA in the 30S particle. May play a critical role in biogenesis of 30S subunits. The sequence is that of Ribosomal RNA small subunit methyltransferase A from Koribacter versatilis (strain Ellin345).